Here is a 303-residue protein sequence, read N- to C-terminus: Large ribosomal subunit protein uL1m (303 aa).

It belongs to the universal ribosomal protein uL1 family. In terms of assembly, component of the mitochondrial large ribosomal subunit (mt-LSU). Mature N.crassa 74S mitochondrial ribosomes consist of a small (37S) and a large (54S) subunit. The 37S small subunit contains a 16S ribosomal RNA (16S mt-rRNA) and 32 different proteins. The 54S large subunit contains a 23S rRNA (23S mt-rRNA) and 42 different proteins.

The protein localises to the mitochondrion. Functionally, component of the mitochondrial ribosome (mitoribosome), a dedicated translation machinery responsible for the synthesis of mitochondrial genome-encoded proteins, including at least some of the essential transmembrane subunits of the mitochondrial respiratory chain. The mitoribosomes are attached to the mitochondrial inner membrane and translation products are cotranslationally integrated into the membrane. This is Large ribosomal subunit protein uL1m (mrpl1) from Neurospora crassa (strain ATCC 24698 / 74-OR23-1A / CBS 708.71 / DSM 1257 / FGSC 987).